The primary structure comprises 138 residues: Small ribosomal subunit protein uS11c (138 aa).

Residues 1–22 (MAKPIPRIGSQRNRRINSRKNA) are disordered. The span at 12 to 22 (RNRRINSRKNA) shows a compositional bias: basic residues.

The protein belongs to the universal ribosomal protein uS11 family. Part of the 30S ribosomal subunit.

It is found in the plastid. Its subcellular location is the chloroplast. The protein is Small ribosomal subunit protein uS11c of Fagopyrum esculentum subsp. ancestrale (Wild buckwheat).